Here is a 244-residue protein sequence, read N- to C-terminus: 3-deoxy-manno-octulosonate cytidylyltransferase (244 aa).

The protein belongs to the KdsB family.

It is found in the cytoplasm. It carries out the reaction 3-deoxy-alpha-D-manno-oct-2-ulosonate + CTP = CMP-3-deoxy-beta-D-manno-octulosonate + diphosphate. The protein operates within nucleotide-sugar biosynthesis; CMP-3-deoxy-D-manno-octulosonate biosynthesis; CMP-3-deoxy-D-manno-octulosonate from 3-deoxy-D-manno-octulosonate and CTP: step 1/1. It participates in bacterial outer membrane biogenesis; lipopolysaccharide biosynthesis. Functionally, activates KDO (a required 8-carbon sugar) for incorporation into bacterial lipopolysaccharide in Gram-negative bacteria. In Ruthia magnifica subsp. Calyptogena magnifica, this protein is 3-deoxy-manno-octulosonate cytidylyltransferase.